A 306-amino-acid chain; its full sequence is Aspartate carbamoyltransferase catalytic subunit (306 aa).

2 residues coordinate carbamoyl phosphate: arginine 51 and threonine 52. Lysine 80 serves as a coordination point for L-aspartate. Residues arginine 101, histidine 129, and glutamine 132 each coordinate carbamoyl phosphate. Arginine 162 and arginine 224 together coordinate L-aspartate. Positions 263 and 264 each coordinate carbamoyl phosphate.

The protein belongs to the aspartate/ornithine carbamoyltransferase superfamily. ATCase family. In terms of assembly, heterododecamer (2C3:3R2) of six catalytic PyrB chains organized as two trimers (C3), and six regulatory PyrI chains organized as three dimers (R2).

The catalysed reaction is carbamoyl phosphate + L-aspartate = N-carbamoyl-L-aspartate + phosphate + H(+). It functions in the pathway pyrimidine metabolism; UMP biosynthesis via de novo pathway; (S)-dihydroorotate from bicarbonate: step 2/3. In terms of biological role, catalyzes the condensation of carbamoyl phosphate and aspartate to form carbamoyl aspartate and inorganic phosphate, the committed step in the de novo pyrimidine nucleotide biosynthesis pathway. The protein is Aspartate carbamoyltransferase catalytic subunit of Parabacteroides distasonis (strain ATCC 8503 / DSM 20701 / CIP 104284 / JCM 5825 / NCTC 11152).